Consider the following 85-residue polypeptide: Putative regulatory protein DICTH_1339 (85 aa).

Belongs to the RemA family.

The protein is Putative regulatory protein DICTH_1339 of Dictyoglomus thermophilum (strain ATCC 35947 / DSM 3960 / H-6-12).